Here is a 344-residue protein sequence, read N- to C-terminus: Glycerol-3-phosphate dehydrogenase [NAD(P)+] (344 aa).

4 residues coordinate NADPH: Ser23, Trp24, Arg44, and Lys118. Sn-glycerol 3-phosphate-binding residues include Lys118, Gly147, and Thr149. Ala151 serves as a coordination point for NADPH. Positions 202, 255, 265, 266, and 267 each coordinate sn-glycerol 3-phosphate. The active-site Proton acceptor is the Lys202. Arg266 contributes to the NADPH binding site. Position 292 (Glu292) interacts with NADPH.

The protein belongs to the NAD-dependent glycerol-3-phosphate dehydrogenase family.

It is found in the cytoplasm. The enzyme catalyses sn-glycerol 3-phosphate + NAD(+) = dihydroxyacetone phosphate + NADH + H(+). The catalysed reaction is sn-glycerol 3-phosphate + NADP(+) = dihydroxyacetone phosphate + NADPH + H(+). Its pathway is membrane lipid metabolism; glycerophospholipid metabolism. In terms of biological role, catalyzes the reduction of the glycolytic intermediate dihydroxyacetone phosphate (DHAP) to sn-glycerol 3-phosphate (G3P), the key precursor for phospholipid synthesis. This Nitrosococcus oceani (strain ATCC 19707 / BCRC 17464 / JCM 30415 / NCIMB 11848 / C-107) protein is Glycerol-3-phosphate dehydrogenase [NAD(P)+].